A 520-amino-acid polypeptide reads, in one-letter code: Bile acid--coenzyme A ligase (520 aa).

This sequence belongs to the ATP-dependent AMP-binding enzyme family. As to quaternary structure, homodimer. The cofactor is Mg(2+).

The enzyme catalyses cholate + ATP + CoA = choloyl-CoA + AMP + diphosphate. It carries out the reaction deoxycholate + ATP + CoA = deoxycholoyl-CoA + AMP + diphosphate. The catalysed reaction is chenodeoxycholate + ATP + CoA = chenodeoxycholoyl-CoA + AMP + diphosphate. Its pathway is lipid metabolism; bile acid biosynthesis. Its activity is regulated as follows. Inhibited by diphosphate. Its function is as follows. Functions in the bile acid 7alpha-dehydroxylation pathway, which forms secondary bile acids via the 7alpha-dehydroxylation of primary bile acids, and is carried out by intestinal anaerobic bacteria. Catalyzes the initial step in this pathway, i.e. the ATP-dependent thioesterification of primary bile acids with coenzyme A. Is active with C-24 bile acids with free carboxyl groups such as cholate, deoxycholate and chenodeoxycholate. Produces AMP and pyrophosphate in addition to the bile acid-CoA thioester. This Clostridium scindens (strain JCM 10418 / VPI 12708) protein is Bile acid--coenzyme A ligase.